A 151-amino-acid polypeptide reads, in one-letter code: Large ribosomal subunit protein bL9 (151 aa).

Belongs to the bacterial ribosomal protein bL9 family.

Functionally, binds to the 23S rRNA. This Chloroherpeton thalassium (strain ATCC 35110 / GB-78) protein is Large ribosomal subunit protein bL9.